Here is a 128-residue protein sequence, read N- to C-terminus: U24-ctenitoxin-Pn1a (128 aa).

2 Thyroglobulin type-1 domains span residues 4 to 67 (KSDC…ECGC) and 72 to 127 (KERK…SLKC). 4 cysteine pairs are disulfide-bonded: cysteine 7–cysteine 27, cysteine 38–cysteine 45, cysteine 47–cysteine 67, and cysteine 107–cysteine 127.

Expressed by the venom gland.

The protein resides in the secreted. Its function is as follows. Cysteine proteinase inhibitor. The chain is U24-ctenitoxin-Pn1a from Phoneutria nigriventer (Brazilian armed spider).